The sequence spans 1214 residues: Lysine-specific demethylase 3A (1214 aa).

Phosphoserine occurs at positions 150 and 209. Over residues 194–211 (TPSSNRQQNTPQAANSPP) the composition is skewed to polar residues. Disordered stretches follow at residues 194-215 (TPSSNRQQNTPQAANSPPNIGA), 271-293 (PKGSCIQPKTNTDQESRLESTPQ), and 310-398 (KAEL…KSVL). Serine 330 bears the Phosphoserine mark. Residues 361 to 370 (LGSQSQNLKE) are compositionally biased toward polar residues. Residues 371–380 (TSVKVDHDSC) are compositionally biased toward basic and acidic residues. Polar residues predominate over residues 381–391 (CTRSSNKTQTP). The C6-type zinc-finger motif lies at 546–571 (CDVCDTTIFNLHWVCPRCGFGVCVDC). Positions 769-773 (LRNLL) match the LXXLL motif motif. Lysine 779 carries the post-translational modification N6-acetyllysine. One can recognise a JmjC domain in the interval 944–1167 (MPSRFDDLMA…HCFWLTQEFR (224 aa)). Histidine 1006, aspartate 1008, and histidine 1135 together coordinate Fe cation.

This sequence belongs to the JHDM2 histone demethylase family. Interacts with VRK1. Fe(2+) is required as a cofactor. In terms of tissue distribution, testis specific. Expressed only in male germ cells.

It is found in the cytoplasm. Its subcellular location is the nucleus. It catalyses the reaction N(6),N(6)-dimethyl-L-lysyl(9)-[histone H3] + 2 2-oxoglutarate + 2 O2 = L-lysyl(9)-[histone H3] + 2 formaldehyde + 2 succinate + 2 CO2. Its function is as follows. Histone demethylase that specifically demethylates 'Lys-9' of histone H3, thereby playing a central role in histone code. Preferentially demethylates mono- and dimethylated H3 'Lys-9' residue, with a preference for dimethylated residue, while it has weak or no activity on trimethylated H3 'Lys-9'. Demethylation of Lys residue generates formaldehyde and succinate. Involved in hormone-dependent transcriptional activation, by participating in recruitment to androgen-receptor target genes, resulting in H3 'Lys-9' demethylation and transcriptional activation. Involved in spermatogenesis by regulating expression of target genes such as PRM1 and TNP1 which are required for packaging and condensation of sperm chromatin. Directly regulates expression of PPARA and UCP1 and is involved in obesity resistance. This chain is Lysine-specific demethylase 3A (Kdm3a), found in Rattus norvegicus (Rat).